A 259-amino-acid polypeptide reads, in one-letter code: Adenylosuccinate synthetase (259 aa).

GTP contacts are provided by residues 3-9 and 31-33; these read GDEGKGK and GHT. Aspartate 4 functions as the Proton acceptor in the catalytic mechanism. Mg(2+) contacts are provided by aspartate 4 and glycine 31. 4 to 7 is a binding site for IMP; that stretch reads DEGK. The Proton donor role is filled by histidine 32. 4 residues coordinate IMP: threonine 120, arginine 134, glutamine 215, and threonine 230.

Belongs to the adenylosuccinate synthetase family. Homodimer. Mg(2+) serves as cofactor.

It is found in the cytoplasm. It catalyses the reaction IMP + L-aspartate + GTP = N(6)-(1,2-dicarboxyethyl)-AMP + GDP + phosphate + 2 H(+). Its pathway is purine metabolism; AMP biosynthesis via de novo pathway; AMP from IMP: step 1/2. Its function is as follows. Plays an important role in the de novo pathway of purine nucleotide biosynthesis. Catalyzes the first committed step in the biosynthesis of AMP from IMP. This Aggregatibacter actinomycetemcomitans (Actinobacillus actinomycetemcomitans) protein is Adenylosuccinate synthetase.